Here is a 79-residue protein sequence, read N- to C-terminus: Acyl carrier protein (79 aa).

The 76-residue stretch at 2 to 77 (SDIGERVKKI…DATKFLEKNA (76 aa)) folds into the Carrier domain. S37 carries the O-(pantetheine 4'-phosphoryl)serine modification.

Belongs to the acyl carrier protein (ACP) family. Post-translationally, 4'-phosphopantetheine is transferred from CoA to a specific serine of apo-ACP by AcpS. This modification is essential for activity because fatty acids are bound in thioester linkage to the sulfhydryl of the prosthetic group.

It is found in the cytoplasm. Its pathway is lipid metabolism; fatty acid biosynthesis. Its function is as follows. Carrier of the growing fatty acid chain in fatty acid biosynthesis. The polypeptide is Acyl carrier protein (Bradyrhizobium diazoefficiens (strain JCM 10833 / BCRC 13528 / IAM 13628 / NBRC 14792 / USDA 110)).